The sequence spans 214 residues: MFKDFNFSIYLVTDDAFFVDRDVVRTIEQAIEGGITAVQYRFKNKPSRKMYEELLVLRDITKQNKVALIVNDRVDLAIAVKADGVHVGQEDLPPDVCKKIIPEDMIVGYSVNNLEQLKDAMTMPIDYIGFGSVFHTKTKKDYKYVGLEALCKATNITSIPIIAIGGITHYNLKDVLKCKVKGVAVVSAILGFEDVKRAASDFKQMYKESLSMQI.

4-amino-2-methyl-5-(diphosphooxymethyl)pyrimidine is bound by residues 39–43 (QYRFK) and N71. D72 and D91 together coordinate Mg(2+). S110 contributes to the 4-amino-2-methyl-5-(diphosphooxymethyl)pyrimidine binding site. A 2-[(2R,5Z)-2-carboxy-4-methylthiazol-5(2H)-ylidene]ethyl phosphate-binding site is contributed by 136 to 138 (TKT). K139 is a binding site for 4-amino-2-methyl-5-(diphosphooxymethyl)pyrimidine. Residues G166 and 186-187 (VS) contribute to the 2-[(2R,5Z)-2-carboxy-4-methylthiazol-5(2H)-ylidene]ethyl phosphate site.

It belongs to the thiamine-phosphate synthase family. Mg(2+) serves as cofactor.

The catalysed reaction is 2-[(2R,5Z)-2-carboxy-4-methylthiazol-5(2H)-ylidene]ethyl phosphate + 4-amino-2-methyl-5-(diphosphooxymethyl)pyrimidine + 2 H(+) = thiamine phosphate + CO2 + diphosphate. It carries out the reaction 2-(2-carboxy-4-methylthiazol-5-yl)ethyl phosphate + 4-amino-2-methyl-5-(diphosphooxymethyl)pyrimidine + 2 H(+) = thiamine phosphate + CO2 + diphosphate. It catalyses the reaction 4-methyl-5-(2-phosphooxyethyl)-thiazole + 4-amino-2-methyl-5-(diphosphooxymethyl)pyrimidine + H(+) = thiamine phosphate + diphosphate. Its pathway is cofactor biosynthesis; thiamine diphosphate biosynthesis; thiamine phosphate from 4-amino-2-methyl-5-diphosphomethylpyrimidine and 4-methyl-5-(2-phosphoethyl)-thiazole: step 1/1. In terms of biological role, condenses 4-methyl-5-(beta-hydroxyethyl)thiazole monophosphate (THZ-P) and 2-methyl-4-amino-5-hydroxymethyl pyrimidine pyrophosphate (HMP-PP) to form thiamine monophosphate (TMP). The protein is Thiamine-phosphate synthase of Hydrogenobaculum sp. (strain Y04AAS1).